Here is a 327-residue protein sequence, read N- to C-terminus: Transaldolase (327 aa).

The Schiff-base intermediate with substrate role is filled by Lys-132.

It belongs to the transaldolase family. Type 1 subfamily.

Its subcellular location is the cytoplasm. The catalysed reaction is D-sedoheptulose 7-phosphate + D-glyceraldehyde 3-phosphate = D-erythrose 4-phosphate + beta-D-fructose 6-phosphate. It functions in the pathway carbohydrate degradation; pentose phosphate pathway; D-glyceraldehyde 3-phosphate and beta-D-fructose 6-phosphate from D-ribose 5-phosphate and D-xylulose 5-phosphate (non-oxidative stage): step 2/3. Its function is as follows. Transaldolase is important for the balance of metabolites in the pentose-phosphate pathway. This Chlamydia pneumoniae (Chlamydophila pneumoniae) protein is Transaldolase.